The following is a 153-amino-acid chain: Transcriptional repressor NrdR (153 aa).

Residues 3–34 fold into a zinc finger; the sequence is CPFCGKENTRVIDSRPADDCSSIRRRRQCDEC. The 91-residue stretch at 49–139 folds into the ATP-cone domain; it reads LVVIKKDNNR…VYREFKDVNT (91 aa).

The protein belongs to the NrdR family. Zn(2+) is required as a cofactor.

Functionally, negatively regulates transcription of bacterial ribonucleotide reductase nrd genes and operons by binding to NrdR-boxes. The protein is Transcriptional repressor NrdR of Lachnoclostridium phytofermentans (strain ATCC 700394 / DSM 18823 / ISDg) (Clostridium phytofermentans).